The following is a 490-amino-acid chain: UDP-N-acetylmuramate--L-alanine ligase (490 aa).

126-132 (GTHGKTT) is a binding site for ATP.

It belongs to the MurCDEF family.

It is found in the cytoplasm. It carries out the reaction UDP-N-acetyl-alpha-D-muramate + L-alanine + ATP = UDP-N-acetyl-alpha-D-muramoyl-L-alanine + ADP + phosphate + H(+). It participates in cell wall biogenesis; peptidoglycan biosynthesis. Functionally, cell wall formation. In Baumannia cicadellinicola subsp. Homalodisca coagulata, this protein is UDP-N-acetylmuramate--L-alanine ligase.